The following is a 118-amino-acid chain: Putative membrane protein insertion efficiency factor (118 aa).

Residues 76-118 (WDPVPQRRPRRRDAAAADAAMSAPHACKGSPHAVVGDTNDGST) are disordered. Low complexity predominate over residues 91–101 (AADAAMSAPHA).

This sequence belongs to the UPF0161 family.

The protein resides in the cell membrane. Its function is as follows. Could be involved in insertion of integral membrane proteins into the membrane. The chain is Putative membrane protein insertion efficiency factor from Nocardia farcinica (strain IFM 10152).